The sequence spans 343 residues: N-acetyl-gamma-glutamyl-phosphate reductase (343 aa).

Cys148 is a catalytic residue.

Belongs to the NAGSA dehydrogenase family. Type 1 subfamily.

It is found in the cytoplasm. The enzyme catalyses N-acetyl-L-glutamate 5-semialdehyde + phosphate + NADP(+) = N-acetyl-L-glutamyl 5-phosphate + NADPH + H(+). It functions in the pathway amino-acid biosynthesis; L-arginine biosynthesis; N(2)-acetyl-L-ornithine from L-glutamate: step 3/4. Its function is as follows. Catalyzes the NADPH-dependent reduction of N-acetyl-5-glutamyl phosphate to yield N-acetyl-L-glutamate 5-semialdehyde. In Caldicellulosiruptor bescii (strain ATCC BAA-1888 / DSM 6725 / KCTC 15123 / Z-1320) (Anaerocellum thermophilum), this protein is N-acetyl-gamma-glutamyl-phosphate reductase.